Here is a 165-residue protein sequence, read N- to C-terminus: Transcriptional regulator MraZ (165 aa).

SpoVT-AbrB domains lie at 5–51 and 80–123; these read TYEG…GEEL and SAEL…NPER.

It belongs to the MraZ family. As to quaternary structure, forms oligomers.

The protein resides in the cytoplasm. The protein localises to the nucleoid. The polypeptide is Transcriptional regulator MraZ (Hyphomonas neptunium (strain ATCC 15444)).